A 482-amino-acid polypeptide reads, in one-letter code: Putative L-cysteine desulfhydrase 1 (482 aa).

The span at 1-10 (MASIPPDDDA) shows a compositional bias: acidic residues. Residues 1-45 (MASIPPDDDAAAAAAAGAAENGYGNGKGNGNGPAPRPPPAKRPRS) form a disordered region. Positions 11–22 (AAAAAAGAAENG) are enriched in low complexity. At lysine 276 the chain carries N6-(pyridoxal phosphate)lysine.

It belongs to the class-V pyridoxal-phosphate-dependent aminotransferase family. Pyridoxal 5'-phosphate is required as a cofactor.

The catalysed reaction is L-cysteine + H2O = hydrogen sulfide + pyruvate + NH4(+) + H(+). Functionally, catalyzes the production of hydrogen sulfide (H2S) from cysteine. The sequence is that of Putative L-cysteine desulfhydrase 1 from Oryza sativa subsp. japonica (Rice).